The chain runs to 3336 residues: Pericentrin (3336 aa).

2 disordered regions span residues 1–71 (MEVE…DICK) and 81–100 (GAGG…KRED). The segment covering 27-37 (TKGDSSHSEKK) has biased composition (basic and acidic residues). S44 is subject to Phosphoserine. At S188 the chain carries Phosphoserine. T191 carries the post-translational modification Phosphothreonine. Residues 258 to 553 (HTAQLELTQA…RLQGAREDAL (296 aa)) are a coiled coil. The interval 569 to 589 (KPEKGRKDHVDELEPERHKES) is disordered. S610 and S682 each carry phosphoserine. Coiled coils occupy residues 675–835 (TEHK…DALH) and 1010–1146 (TILT…MLKA). Phosphoserine is present on S1245. Residues 1299-1949 (NEETAQVVRK…FLRCQVELDR (651 aa)) adopt a coiled-coil conformation. The interval 1619–1638 (TLDAGRCPEPPSGSPPEGPE) is disordered. A compositionally biased stretch (pro residues) spans 1626–1636 (PEPPSGSPPEG). A phosphoserine mark is found at S1653 and S1712. Residues 1954-1974 (RATAHTRVPGAHPQPRMDGGA) form a disordered region. S2044 is subject to Phosphoserine. The stretch at 2064-2082 (VDLVAQVKQLQEKLNRLLY) forms a coiled coil. The segment at 2168-2214 (SLIPDEMPDSPIQEKSECQDMSLSSPTSVLGGSRHQSHTAEAGPRKS) is disordered. Residues S2177, S2192, S2225, S2226, and S2327 each carry the phosphoserine modification. The span at 2186 to 2197 (QDMSLSSPTSVL) shows a compositional bias: polar residues. The disordered stretch occupies residues 2318-2374 (SFDSQETLSSPPPGLEGKADRSEKSDGSGFGARLSPGSGGPEAQTAGPVTPASISGR). Positions 2334–2343 (GKADRSEKSD) are enriched in basic and acidic residues. A phosphoserine mark is found at S2352, S2355, S2477, and S2486. Residues 2536 to 3086 (QEKLQHLRTA…EKLLKHHLQK (551 aa)) adopt a coiled-coil conformation. 2 disordered regions span residues 2875–2910 (LEQS…WRKW) and 3084–3126 (LQKG…EEAH). Composition is skewed to basic and acidic residues over residues 2876-2896 (EQSH…RSAE) and 3092-3102 (RSERSAWKPDE). Residues 2983–3246 (LSAARLLTSF…ARQPQSPPRT (264 aa)) form an interaction with NEK2 region. The segment at 3195 to 3208 (RFRTAVRVVIAILR) is calmodulin-binding. Residues 3224–3300 (ALAQGKAPRP…RSLTASQDPE (77 aa)) form a disordered region. Residues 3226–3240 (AQGKAPRPGPRARQP) are compositionally biased toward low complexity. The segment covering 3283–3297 (PSPNSRLERSLTASQ) has biased composition (polar residues). At S3302 the chain carries Phosphoserine.

Interacts with CHD3. Interacts with CHD4; the interaction regulates centrosome integrity. Interacts with DISC1 and PCM1. Binds calmodulin. Interacts with CDK5RAP2; the interaction is leading to centrosomal localization of PCNT and CDK5RAP2. Interacts with isoform 1 of NEK2. Interacts with CEP131. Interacts with CCDC13. Interacts with CEP68. Interacts with ATF5; the ATF5:PCNT:polyglutamylated tubulin (PGT) tripartite unites the mother centriole and the pericentriolar material (PCM) in the centrosome. Cleaved during mitotis which leads to removal of CDK5RAP2 from the centrosome and promotes centriole disengagement and subsequent centriole separation. The C-terminal fragment is rapidly degraded following cleavage. Post-translationally, ubiquitinated by TRIM43; leading to proteasomal degradation. As to expression, expressed in all tissues tested, including placenta, liver, kidney and thymus.

It is found in the cytoplasm. The protein localises to the cytoskeleton. Its subcellular location is the microtubule organizing center. It localises to the centrosome. Its function is as follows. Integral component of the filamentous matrix of the centrosome involved in the initial establishment of organized microtubule arrays in both mitosis and meiosis. Plays a role, together with DISC1, in the microtubule network formation. Is an integral component of the pericentriolar material (PCM). May play an important role in preventing premature centrosome splitting during interphase by inhibiting NEK2 kinase activity at the centrosome. The polypeptide is Pericentrin (PCNT) (Homo sapiens (Human)).